The following is a 492-amino-acid chain: Polyamine oxidase 5 (492 aa).

FAD contacts are provided by E55, R63, V244, and E431. The Microbody targeting signal motif lies at 490-492; the sequence is SRL.

This sequence belongs to the flavin monoamine oxidase family. FAD serves as cofactor. Widely expressed.

The protein resides in the peroxisome. The enzyme catalyses spermine + O2 + H2O = 3-aminopropanal + spermidine + H2O2. It catalyses the reaction norspermine + O2 + H2O = norspermidine + 3-aminopropanal + H2O2. The catalysed reaction is thermospermine + O2 + H2O = 3-aminopropanal + spermidine + H2O2. The protein operates within amine and polyamine degradation; spermine degradation. Its function is as follows. Flavoenzyme involved in polyamine back-conversion. Catalyzes the oxidation of the secondary amino group of polyamines, such as spermine. Substrate preference is spermine &gt; thermospermine &gt; norspermine. No activity detected when putrescine, spermidine or N(1)-acetylspermidine are used as substrates. Plays an important role in the regulation of polyamine intracellular concentration. May play a role in producing hydrogen peroxide during seed germination. The sequence is that of Polyamine oxidase 5 from Oryza sativa subsp. japonica (Rice).